The sequence spans 367 residues: Putative C-&gt;U-editing enzyme APOBEC-4 (367 aa).

One can recognise a CMP/dCMP-type deaminase domain in the interval proline 61 to leucine 177. Histidine 93 serves as a coordination point for Zn(2+). The active-site Proton donor is glutamate 95. Residues cysteine 127 and cysteine 134 each coordinate Zn(2+).

It belongs to the cytidine and deoxycytidylate deaminase family. Zn(2+) serves as cofactor. In terms of tissue distribution, predominantly expressed in testis.

In terms of biological role, putative C to U editing enzyme whose physiological substrate is not yet known. The chain is Putative C-&gt;U-editing enzyme APOBEC-4 (APOBEC4) from Homo sapiens (Human).